Here is a 69-residue protein sequence, read N- to C-terminus: DNA gyrase inhibitor YacG (69 aa).

Cysteine 13, cysteine 16, cysteine 32, and cysteine 36 together coordinate Zn(2+).

The protein belongs to the DNA gyrase inhibitor YacG family. In terms of assembly, interacts with GyrB. It depends on Zn(2+) as a cofactor.

Its function is as follows. Inhibits all the catalytic activities of DNA gyrase by preventing its interaction with DNA. Acts by binding directly to the C-terminal domain of GyrB, which probably disrupts DNA binding by the gyrase. The sequence is that of DNA gyrase inhibitor YacG from Neisseria meningitidis serogroup A / serotype 4A (strain DSM 15465 / Z2491).